The sequence spans 116 residues: Nucleoid-associated protein EUBELI_02017 (116 aa).

A compositionally biased stretch (gly residues) spans methionine 1–proline 12. Positions methionine 1 to serine 42 are disordered. Low complexity predominate over residues glycine 13 to glutamine 26.

Belongs to the YbaB/EbfC family. Homodimer.

It is found in the cytoplasm. It localises to the nucleoid. In terms of biological role, binds to DNA and alters its conformation. May be involved in regulation of gene expression, nucleoid organization and DNA protection. The polypeptide is Nucleoid-associated protein EUBELI_02017 (Lachnospira eligens (strain ATCC 27750 / DSM 3376 / VPI C15-48 / C15-B4) (Eubacterium eligens)).